Reading from the N-terminus, the 501-residue chain is Proline--tRNA ligase (501 aa).

It belongs to the class-II aminoacyl-tRNA synthetase family. ProS type 3 subfamily. In terms of assembly, homodimer.

It localises to the cytoplasm. It catalyses the reaction tRNA(Pro) + L-proline + ATP = L-prolyl-tRNA(Pro) + AMP + diphosphate. Functionally, catalyzes the attachment of proline to tRNA(Pro) in a two-step reaction: proline is first activated by ATP to form Pro-AMP and then transferred to the acceptor end of tRNA(Pro). This is Proline--tRNA ligase from Halobacterium salinarum (strain ATCC 29341 / DSM 671 / R1).